We begin with the raw amino-acid sequence, 46 residues long: Large ribosomal subunit protein bL33A (46 aa).

It belongs to the bacterial ribosomal protein bL33 family.

The protein is Large ribosomal subunit protein bL33A of Mesomycoplasma hyopneumoniae (strain 7448) (Mycoplasma hyopneumoniae).